Here is a 244-residue protein sequence, read N- to C-terminus: 3-deoxy-manno-octulosonate cytidylyltransferase (244 aa).

This sequence belongs to the KdsB family.

The protein localises to the cytoplasm. The catalysed reaction is 3-deoxy-alpha-D-manno-oct-2-ulosonate + CTP = CMP-3-deoxy-beta-D-manno-octulosonate + diphosphate. It participates in nucleotide-sugar biosynthesis; CMP-3-deoxy-D-manno-octulosonate biosynthesis; CMP-3-deoxy-D-manno-octulosonate from 3-deoxy-D-manno-octulosonate and CTP: step 1/1. The protein operates within bacterial outer membrane biogenesis; lipopolysaccharide biosynthesis. Activates KDO (a required 8-carbon sugar) for incorporation into bacterial lipopolysaccharide in Gram-negative bacteria. The chain is 3-deoxy-manno-octulosonate cytidylyltransferase from Rickettsia canadensis (strain McKiel).